The chain runs to 146 residues: Hemoglobin subunit beta (146 aa).

The residue at position 1 (valine 1) is an N-acetylvaline. Residues 2 to 146 (ELTAEEKAAV…VANALAHKYH (145 aa)) enclose the Globin domain. At serine 44 the chain carries Phosphoserine. Lysine 59 is modified (N6-acetyllysine). Heme b is bound at residue histidine 63. An N6-acetyllysine modification is found at lysine 82. Histidine 92 is a binding site for heme b. An S-nitrosocysteine modification is found at cysteine 93. At lysine 144 the chain carries N6-acetyllysine.

Belongs to the globin family. In terms of assembly, heterotetramer of two alpha chains and two beta chains. In terms of tissue distribution, red blood cells.

In terms of biological role, involved in oxygen transport from the lung to the various peripheral tissues. This is Hemoglobin subunit beta (HBB) from Ceratotherium simum (White rhinoceros).